Here is a 78-residue protein sequence, read N- to C-terminus: Acyl carrier protein (78 aa).

The Carrier domain occupies 2–77 (STIEESVKAI…AAIDFIQASQ (76 aa)). Ser-37 carries the O-(pantetheine 4'-phosphoryl)serine modification.

The protein belongs to the acyl carrier protein (ACP) family. In terms of processing, 4'-phosphopantetheine is transferred from CoA to a specific serine of apo-ACP by AcpS. This modification is essential for activity because fatty acids are bound in thioester linkage to the sulfhydryl of the prosthetic group.

Its subcellular location is the cytoplasm. It participates in lipid metabolism; fatty acid biosynthesis. Carrier of the growing fatty acid chain in fatty acid biosynthesis. This is Acyl carrier protein from Sodalis glossinidius (strain morsitans).